A 754-amino-acid polypeptide reads, in one-letter code: ATP-dependent RNA helicase drs1 (754 aa).

The interval 121 to 237 is disordered; that stretch reads SKTESNRASN…SDSEEDEEEI (117 aa). Composition is skewed to acidic residues over residues 155-175 and 186-205; these read SEEE…EDLA and ENED…DDIT. The Q motif signature appears at 259 to 287; the sequence is SSFQSMNLSRPILKGLSNLGFEVPTQIQD. One can recognise a Helicase ATP-binding domain in the interval 290–464; sequence IPLALLGKDI…RLSLNRPVRV (175 aa). An ATP-binding site is contributed by 303 to 310; sequence AVTGSGKT. The DEAD box motif lies at 412–415; it reads DEAD. Residues 475-641 form the Helicase C-terminal domain; it reads LLTQEFVRVR…NRNLDFNKVE (167 aa). Residues 655 to 728 adopt a coiled-coil conformation; sequence QKVLDEEKQE…RKKQMEKEEV (74 aa). Positions 692–754 are disordered; it reads ARTWFQSEKD…STKKSKSKRK (63 aa). Composition is skewed to basic and acidic residues over residues 698–715 and 723–741; these read SEKD…DKKS and MEKE…DRLS. A compositionally biased stretch (basic residues) spans 742 to 754; sequence NKKSTKKSKSKRK.

The protein belongs to the DEAD box helicase family. DDX27/DRS1 subfamily. In terms of assembly, associates with pre-ribosomal particles.

It localises to the nucleus. The protein localises to the nucleolus. The catalysed reaction is ATP + H2O = ADP + phosphate + H(+). Functionally, ATP-binding RNA helicase involved in ribosome assembly. The protein is ATP-dependent RNA helicase drs1 (drs1) of Schizosaccharomyces pombe (strain 972 / ATCC 24843) (Fission yeast).